The following is a 61-amino-acid chain: Small ribosomal subunit protein uS14 (61 aa).

Zn(2+) is bound by residues C24, C27, C40, and C43.

The protein belongs to the universal ribosomal protein uS14 family. Zinc-binding uS14 subfamily. Part of the 30S ribosomal subunit. Contacts proteins S3 and S10. Zn(2+) serves as cofactor.

Functionally, binds 16S rRNA, required for the assembly of 30S particles and may also be responsible for determining the conformation of the 16S rRNA at the A site. The polypeptide is Small ribosomal subunit protein uS14 (Clostridium botulinum (strain Alaska E43 / Type E3)).